We begin with the raw amino-acid sequence, 157 residues long: 3-dehydroquinate dehydratase (157 aa).

Tyr22 functions as the Proton acceptor in the catalytic mechanism. Residues Asn73, His79, and Asp86 each coordinate substrate. His99 serves as the catalytic Proton donor. Substrate contacts are provided by residues 100–101 and Arg110; that span reads LS.

The protein belongs to the type-II 3-dehydroquinase family. In terms of assembly, homododecamer.

It carries out the reaction 3-dehydroquinate = 3-dehydroshikimate + H2O. Its pathway is metabolic intermediate biosynthesis; chorismate biosynthesis; chorismate from D-erythrose 4-phosphate and phosphoenolpyruvate: step 3/7. Its function is as follows. Catalyzes a trans-dehydration via an enolate intermediate. The chain is 3-dehydroquinate dehydratase from Roseiflexus castenholzii (strain DSM 13941 / HLO8).